Reading from the N-terminus, the 288-residue chain is Thiamine-monophosphate kinase (288 aa).

The Mg(2+) site is built by D20, T30, and D32. A substrate-binding site is contributed by D39. Mg(2+) is bound by residues D60 and D107. Residues 106 to 107 and R130 each bind ATP; that span reads GD. D188 serves as a coordination point for Mg(2+). ATP is bound at residue S190. D191 lines the Mg(2+) pocket. Substrate is bound at residue W286.

This sequence belongs to the thiamine-monophosphate kinase family.

It carries out the reaction thiamine phosphate + ATP = thiamine diphosphate + ADP. It participates in cofactor biosynthesis; thiamine diphosphate biosynthesis; thiamine diphosphate from thiamine phosphate: step 1/1. In terms of biological role, catalyzes the ATP-dependent phosphorylation of thiamine-monophosphate (TMP) to form thiamine-pyrophosphate (TPP), the active form of vitamin B1. This Halobacterium salinarum (strain ATCC 700922 / JCM 11081 / NRC-1) (Halobacterium halobium) protein is Thiamine-monophosphate kinase.